A 1243-amino-acid chain; its full sequence is Interphotoreceptor matrix proteoglycan 2 (1243 aa).

An N-terminal signal peptide occupies residues 1–27 (MIMFLPVGRMSLGILILFLTGGNLVSA). The Extracellular segment spans residues 28–1106 (SEERQEPMHA…EFVSEPFVIG (1079 aa)). The interval 205 to 234 (GLASESSAASPQESISNEIENVTEEPTQPA) is disordered. The segment covering 207–220 (ASESSAASPQESIS) has biased composition (low complexity). Residues 221-230 (NEIENVTEEP) show a composition bias toward polar residues. N-linked (GlcNAc...) asparagine glycosylation is present at Asn-225. Residues 235–349 (AEQIAEFSIQ…KPTAVYTISN (115 aa)) form the SEA 1 domain. A hyaluronan-binding motif involved in chondroitin sulfate A-binding region spans residues 255 to 263 (RDPSSALYR). 3 N-linked (GlcNAc...) asparagine glycosylation sites follow: Asn-297, Asn-316, and Asn-366. 3 O-linked (GalNAc...) threonine glycosylation sites follow: Thr-427, Thr-428, and Thr-429. N-linked (GlcNAc...) asparagine glycosylation occurs at Asn-582. O-linked (GalNAc...) threonine glycosylation is found at Thr-701, Thr-704, and Thr-712. Positions 748 to 762 (EDMVHTESSSHKELD) are enriched in basic and acidic residues. The disordered stretch occupies residues 748-768 (EDMVHTESSSHKELDSEVPVS). O-linked (GalNAc...) threonine glycans are attached at residues Thr-817 and Thr-888. The region spanning 900-1013 (GALVVFFSLR…YSLDVESGDE (114 aa)) is the SEA 2 domain. N-linked (GlcNAc...) asparagine glycans are attached at residues Asn-945 and Asn-959. EGF-like domains lie at 1013 to 1054 (EANP…LPCQ) and 1055 to 1096 (SLCD…QHCE). Disulfide bonds link Cys-1017–Cys-1028, Cys-1022–Cys-1039, Cys-1041–Cys-1053, Cys-1057–Cys-1070, Cys-1064–Cys-1080, and Cys-1082–Cys-1095. Positions 1083–1091 (RVGSNWWYR) are hyaluronan-binding motif involved in chondroitin sulfate C-binding. Residues 1107 to 1127 (ITIASVVSFLLVASAVVFFLV) traverse the membrane as a helical segment. The segment at 1128–1136 (KMLQAQNVR) is hyaluronan-binding motif involved in chondroitin sulfate A- and C-binding. Residues 1128–1243 (KMLQAQNVRR…FVREHQMEEL (116 aa)) are Cytoplasmic-facing. A hyaluronan-binding motif involved in chondroitin sulfate C-binding region spans residues 1139–1147 (RQRPTSSSR). Positions 1212 to 1220 (KEEIQERMR) are hyaluronan-binding motif involved in chondroitin sulfate A- and C-binding motif.

As to expression, expressed in the retina (at protein level). Expressed in the pineal gland.

The protein resides in the photoreceptor outer segment membrane. Its subcellular location is the photoreceptor inner segment membrane. It localises to the secreted. The protein localises to the extracellular space. It is found in the extracellular matrix. The protein resides in the interphotoreceptor matrix. Functionally, chondroitin sulfate- and hyaluronan-binding proteoglycan involved in the organization of interphotoreceptor matrix; may participate in the maturation and maintenance of the light-sensitive photoreceptor outer segment. Binds heparin. This is Interphotoreceptor matrix proteoglycan 2 (Impg2) from Mus musculus (Mouse).